A 201-amino-acid chain; its full sequence is MSRYKGPSLRIIRRLGELPGLTRKVVKKRKYPPGQHGQKSRKRSEYAIRLEEKQKLRYNYGLTERQLVQCVRRAKQMKGSTGQILLQLLEMRLDNIVFRLGMAPTIPASRQLVNHGHICVNNKVVSIPSYQCKPGDIITVKERNASKKIVETNLLFPGLANLPSHLEFDKSKLQGKVNDIIQREWVALEVNELLIVEFYSR.

The region spanning 91–153 is the S4 RNA-binding domain; that stretch reads MRLDNIVFRL…NASKKIVETN (63 aa).

This sequence belongs to the universal ribosomal protein uS4 family. Part of the 30S ribosomal subunit. Contacts protein S5. The interaction surface between S4 and S5 is involved in control of translational fidelity.

The protein resides in the plastid. The protein localises to the cyanelle. Its function is as follows. One of the primary rRNA binding proteins, it binds directly to 16S rRNA where it nucleates assembly of the body of the 30S subunit. Functionally, with S5 and S12 plays an important role in translational accuracy. The sequence is that of Small ribosomal subunit protein uS4c (rps4) from Cyanophora paradoxa.